Reading from the N-terminus, the 196-residue chain is Pentatricopeptide repeat-containing protein At1g62350 (196 aa).

PPR repeat units lie at residues 70–104 and 105–139; these read DMFF…EVLF and DQHT…PDRP.

This sequence belongs to the PPR family. P subfamily.

This Arabidopsis thaliana (Mouse-ear cress) protein is Pentatricopeptide repeat-containing protein At1g62350.